The primary structure comprises 592 residues: Aspartate--tRNA ligase (592 aa).

Glu171 lines the L-aspartate pocket. The aspartate stretch occupies residues 195–198 (QLFK). Residue Arg217 coordinates L-aspartate. ATP is bound by residues 217 to 219 (RDE) and Gln226. His448 is an L-aspartate binding site. Glu482 contacts ATP. Arg489 is a binding site for L-aspartate. 534-537 (GLDR) provides a ligand contact to ATP.

It belongs to the class-II aminoacyl-tRNA synthetase family. Type 1 subfamily. As to quaternary structure, homodimer.

Its subcellular location is the cytoplasm. The catalysed reaction is tRNA(Asp) + L-aspartate + ATP = L-aspartyl-tRNA(Asp) + AMP + diphosphate. In terms of biological role, catalyzes the attachment of L-aspartate to tRNA(Asp) in a two-step reaction: L-aspartate is first activated by ATP to form Asp-AMP and then transferred to the acceptor end of tRNA(Asp). This Vibrio vulnificus (strain CMCP6) protein is Aspartate--tRNA ligase.